A 286-amino-acid chain; its full sequence is 2-hydroxy-6-oxo-6-phenylhexa-2,4-dienoate hydrolase (286 aa).

Substrate contacts are provided by residues 42 to 43 (GG), Asn-51, Asn-111, Ser-180, and Arg-190. His-265 acts as the Proton acceptor in catalysis. Residue Trp-266 participates in substrate binding.

This sequence belongs to the AB hydrolase superfamily. BphD family. In terms of assembly, homodimer.

It carries out the reaction 2,6-dioxo-6-phenylhexa-3-enoate + H2O = 2-oxopent-4-enoate + benzoate + H(+). Its pathway is xenobiotic degradation; biphenyl degradation; 2-hydroxy-2,4-pentadienoate and benzoate from biphenyl: step 4/4. Functionally, catalyzes an unusual C-C bond hydrolysis of 2-hydroxy-6-oxo-6-phenylhexa-2,4-dienoic acid (HOPDA) to produce benzoic acid and 2-hydroxy-2,4-pentadienoic acid (HPD). This chain is 2-hydroxy-6-oxo-6-phenylhexa-2,4-dienoate hydrolase (bphD), found in Pseudomonas putida (Arthrobacter siderocapsulatus).